Consider the following 82-residue polypeptide: Cyclin-dependent kinases regulatory subunit (82 aa).

This sequence belongs to the CKS family. As to quaternary structure, forms a homohexamer that can probably bind six kinase subunits.

In terms of biological role, binds to the catalytic subunit of the cyclin dependent kinases and is essential for their biological function. This is Cyclin-dependent kinases regulatory subunit (cks1) from Dictyostelium discoideum (Social amoeba).